We begin with the raw amino-acid sequence, 699 residues long: MSSGESHQEQLSQSDPSPSPNSCSSFELIDMDASSSYEPVSPHWFYCKVLDSKELWIPFNSEDSQQLEDAYGSGKDCNERIVPTDGGRYDVHLGERMRYAVYWDELPSEVRRCTWFYKGDKDNKYVPYSESFSQVLEDTYMLAVTLDEWKKKIESPNREIIVLHNPKLMVHYQPIAGSDEWGSTSTEQGRPRSVKRGVENIPVDIHCGEPLQIDHLVFVVHGIGPACDLRFRSIVQCVNDFRSVSLNLLQTHFKKAQENEQIGRVEFLPVNWHSPLHSTGVDIDLQRITLPSINRLRHFTNDTILDVFFYNSPTYCQTIVDTVASEMNRIYTLFLQRNPDFKGGVSIAGHSLGSLILFDILTNQKNSIGDIDSEKGSLSSAEDRGDASTLEEDLKKLQLSEFVTVFEKEKVDREALALCTDRDLQEMGIPLGPRKKILNHFSARKNSVSINRPAMSASEVNISKENGDYLDVGIGQVSVKYPRLNYKPEIFFAFGSPIGMFLTVRGLRRIDPNYKFPTCKGFFNIYHPFDPVAYRIEPMVAPGIEFEPMLIPHHKGRKRMHLELREGLTRMSMDLKNNLLGSLRMAWKSFTRGPYPALQASETAEETEAEPESSSEKSNEANTEEPPVEVKEEAPISVGMLNGGQRIDYVLQEKPIESFNEYLFALQSHLCYWESEDTVLLVLKEIYQTQGVFLDQPLQ.

A compositionally biased stretch (polar residues) spans 1 to 11; that stretch reads MSSGESHQEQL. The segment at 1–25 is disordered; the sequence is MSSGESHQEQLSQSDPSPSPNSCSS. A compositionally biased stretch (low complexity) spans 12–25; that stretch reads SQSDPSPSPNSCSS. In terms of domain architecture, WWE spans 30 to 112; that stretch reads DMDASSSYEP…WDELPSEVRR (83 aa). S351 serves as the catalytic Nucleophile. The 63-residue stretch at 383 to 445 folds into the SAM domain; sequence DRGDASTLEE…KILNHFSARK (63 aa). Position 447 is a phosphoserine (S447). The region spanning 484-688 is the DDHD domain; it reads LNYKPEIFFA…VLLVLKEIYQ (205 aa). Residues 599–635 are disordered; the sequence is QASETAEETEAEPESSSEKSNEANTEEPPVEVKEEAP. Residues 603–613 are compositionally biased toward acidic residues; that stretch reads TAEETEAEPES.

Belongs to the PA-PLA1 family. In terms of assembly, forms homooligomers and, to a much smaller extent, heterooligomers with DDHD1.

Its subcellular location is the cytoplasm. The protein resides in the cytosol. The protein localises to the endoplasmic reticulum-Golgi intermediate compartment. It is found in the golgi apparatus. It localises to the cis-Golgi network. The enzyme catalyses a triacylglycerol + H2O = a diacylglycerol + a fatty acid + H(+). It catalyses the reaction a diacylglycerol + H2O = a monoacylglycerol + a fatty acid + H(+). The catalysed reaction is a 1,3-diacylglycerol + H2O = a 1-acylglycerol + a fatty acid + H(+). It carries out the reaction a 1-acylglycerol + H2O = glycerol + a fatty acid + H(+). The enzyme catalyses 1,2,3-tri-(9Z-octadecenoyl)-glycerol + H2O = di-(9Z)-octadecenoylglycerol + (9Z)-octadecenoate + H(+). It catalyses the reaction di-(9Z)-octadecenoylglycerol + H2O = (9Z-octadecenoyl)-glycerol + (9Z)-octadecenoate + H(+). The catalysed reaction is 1,3-di-(9Z-octadecenoyl)-glycerol + H2O = 1-(9Z-octadecenoyl)-glycerol + (9Z)-octadecenoate + H(+). It carries out the reaction trihexadecanoylglycerol + H2O = dihexadecanoylglycerol + hexadecanoate + H(+). The enzyme catalyses 1,2-di-(9Z-octadecenoyl)-sn-glycero-3-phosphocholine + H2O = (9Z-octadecenoyl)-sn-glycero-3-phosphocholine + (9Z)-octadecenoate + H(+). It catalyses the reaction 1-(9Z-octadecenoyl)-glycerol + H2O = glycerol + (9Z)-octadecenoate + H(+). The catalysed reaction is 1,2-di-(9Z-octadecenoyl)-sn-glycero-3-phosphate + H2O = 2-(9Z-octadecenoyl)-sn-glycero-3-phosphate + (9Z)-octadecenoate + H(+). It carries out the reaction 1-hexadecanoyl-2-(9Z-octadecenoyl)-sn-glycero-3-phosphate + H2O = 2-(9Z-octadecenoyl)-sn-glycero-3-phosphate + hexadecanoate + H(+). The enzyme catalyses 1-hexadecanoyl-2-(9Z-octadecenoyl)-sn-glycero-3-phosphoethanolamine + H2O = 2-(9Z-octadecenoyl)-sn-glycero-3-phosphoethanolamine + hexadecanoate + H(+). It catalyses the reaction 1-hexadecanoyl-2-(9Z-octadecenoyl)-sn-glycero-3-phospho-L-serine + H2O = 2-(9Z-octadecenoyl)-sn-glycero-3-phospho-L-serine + hexadecanoate + H(+). The catalysed reaction is 1-hexadecanoyl-2-(9Z-octadecenoyl)-sn-glycero-3-phosphocholine + H2O = 2-(9Z-octadecenoyl)-sn-glycero-3-phosphocholine + hexadecanoate + H(+). Its function is as follows. Diacylglycerol (DAG) and triacylglycerol (TAG) lipase that is required for proper lipid homeostasis in the central nervous system. It cooperates with PNPLA2/ATGL in neuronal TAG catabolism and hydrolyzes sn-1,3-DAG downstream of PNPLA2/ATGL. In vitro, also acts as a phospholipase that hydrolyzes preferentially phosphatidic acids, including 1,2-dioleoyl-sn-phosphatidic acid, phosphatidylcholine and phosphatidylethanolamine. Specifically binds to phosphatidylinositol 3-phosphate (PI(3)P), phosphatidylinositol 4-phosphate (PI(4)P), phosphatidylinositol 5-phosphate (PI(5)P) and possibly phosphatidylinositol 4,5-bisphosphate (PI(4,5)P2). May be involved in the maintenance of the endoplasmic reticulum and/or Golgi structures. May regulate the transport between Golgi apparatus and plasma membrane. This Mus musculus (Mouse) protein is Triacylglycerol hydrolase DDHD2.